A 466-amino-acid polypeptide reads, in one-letter code: Asparagine--tRNA ligase (466 aa).

It belongs to the class-II aminoacyl-tRNA synthetase family. Homodimer.

It localises to the cytoplasm. The enzyme catalyses tRNA(Asn) + L-asparagine + ATP = L-asparaginyl-tRNA(Asn) + AMP + diphosphate + H(+). The protein is Asparagine--tRNA ligase of Escherichia coli O157:H7.